A 412-amino-acid chain; its full sequence is MYSFEDIKVFDPELADSITMEIARQNDHIELIASENFVSKAVMAAMGSPLTNKYAEGYPGKRYYGGCEFVDIAENLAIERAKKLFGCTYANVQPHSGAQANMAVFFALLQPGDTVMGMNLAHGGHLTHGSPVNFSGSYFNIVPYGVDDNGFIDYEEVEKIAKECKPKLIVAGASAYARKIDFKRFREIADLVGAYLMVDMAHIAGLVAAGYHQSPIPYAHVTTTTTHKTLRGPRGGMILSSEEFAEEHKLNKSIFPGTQGGPLMHVIAAKAICFKEALDDSFKDYAGKIISNAGALANELTARGFNLVSGGTDNHLMLIDLQNMNITGKEAEHILDEANITCNKNTVPNDPASPFVTSGIRLGTPAITTRGFNEKDMAVVAEAISLVVKDVDKNKEQAKALVKMLTDAYPLY.

(6S)-5,6,7,8-tetrahydrofolate is bound by residues L120 and G124 to L126. The residue at position 228 (K228) is an N6-(pyridoxal phosphate)lysine. (6S)-5,6,7,8-tetrahydrofolate is bound at residue S353–F355.

Belongs to the SHMT family. As to quaternary structure, homodimer. Pyridoxal 5'-phosphate is required as a cofactor.

It localises to the cytoplasm. It carries out the reaction (6R)-5,10-methylene-5,6,7,8-tetrahydrofolate + glycine + H2O = (6S)-5,6,7,8-tetrahydrofolate + L-serine. It functions in the pathway one-carbon metabolism; tetrahydrofolate interconversion. Its pathway is amino-acid biosynthesis; glycine biosynthesis; glycine from L-serine: step 1/1. Its function is as follows. Catalyzes the reversible interconversion of serine and glycine with tetrahydrofolate (THF) serving as the one-carbon carrier. This reaction serves as the major source of one-carbon groups required for the biosynthesis of purines, thymidylate, methionine, and other important biomolecules. Also exhibits THF-independent aldolase activity toward beta-hydroxyamino acids, producing glycine and aldehydes, via a retro-aldol mechanism. This Lachnoclostridium phytofermentans (strain ATCC 700394 / DSM 18823 / ISDg) (Clostridium phytofermentans) protein is Serine hydroxymethyltransferase.